The chain runs to 248 residues: MSLFPSLPLLLLSMVAASYSETVTCEDAQKTCPAVIACSSPGINGFPGKDGRDGTKGEKGEPGQGLRGLQGPPGKLGPPGNPGPSGSPGPKGQKGDPGKSPDGDSSLAASERKALQTEMARIKKWLTFSLGKQVGNKFFLTNGEIMTFEKVKALCVKFQASVATPRNAAENGAIRNLIKEEAFLGITDEKTEGQFVDLTGNRLTYTNWNEGEPNNAGSDEDCVLLLKNGQWNDVPCSTSHLAVCEFPI.

An N-terminal signal peptide occupies residues 1 to 20 (MSLFPSLPLLLLSMVAASYS). A Collagen-like domain is found at 42-99 (GINGFPGKDGRDGTKGEKGEPGQGLRGLQGPPGKLGPPGNPGPSGSPGPKGQKGDPGK). Residues 43 to 113 (INGFPGKDGR…DSSLAASERK (71 aa)) form a disordered region. 4-hydroxyproline is present on P47. Residues 49–61 (KDGRDGTKGEKGE) show a composition bias toward basic and acidic residues. 4-hydroxyproline is present on residues P73, P79, P82, and P88. Pro residues predominate over residues 75-87 (KLGPPGNPGPSGS). Over residues 93 to 102 (QKGDPGKSPD) the composition is skewed to basic and acidic residues. Residues 112–130 (RKALQTEMARIKKWLTFSL) adopt a coiled-coil conformation. In terms of domain architecture, C-type lectin spans 134–245 (VGNKFFLTNG…CSTSHLAVCE (112 aa)). 2 cysteine pairs are disulfide-bonded: C155/C244 and C222/C236.

In terms of assembly, oligomeric complex of 3 or more homotrimers. Interacts with MASP1 and MASP2. Interacts with MEP1A and MEP1B and may inhibit their catalytic activity. Post-translationally, hydroxylation on proline residues within the sequence motif, GXPG, is most likely to be 4-hydroxy as this fits the requirement for 4-hydroxylation in vertebrates.

It is found in the secreted. Functionally, calcium-dependent lectin involved in innate immune defense. Binds mannose, fucose and N-acetylglucosamine on different microorganisms and activates the lectin complement pathway. Binds to late apoptotic cells, as well as to apoptotic blebs and to necrotic cells, but not to early apoptotic cells, facilitating their uptake by macrophages. This Gorilla gorilla gorilla (Western lowland gorilla) protein is Mannose-binding protein C (MBL2).